The chain runs to 70 residues: Large ribosomal subunit protein eL38 (70 aa).

It belongs to the eukaryotic ribosomal protein eL38 family.

The polypeptide is Large ribosomal subunit protein eL38 (RpL38) (Julodis onopordi (Jewel beetle)).